The following is a 322-amino-acid chain: Eukaryotic translation initiation factor 3 subunit I (322 aa).

5 WD repeats span residues 4 to 43 (GHER…RLGT), 46 to 85 (GHQG…IIAS), 141 to 180 (MTES…KVVD), 184 to 223 (DHTA…CLKT), and 281 to 322 (GHFG…NIFE).

This sequence belongs to the eIF-3 subunit I family. As to quaternary structure, component of the eukaryotic translation initiation factor 3 (eIF-3) complex. The eIF-3 complex interacts with pix.

Its subcellular location is the cytoplasm. In terms of biological role, component of the eukaryotic translation initiation factor 3 (eIF-3) complex, which is involved in protein synthesis of a specialized repertoire of mRNAs and, together with other initiation factors, stimulates binding of mRNA and methionyl-tRNAi to the 40S ribosome. The eIF-3 complex specifically targets and initiates translation of a subset of mRNAs involved in cell proliferation. This chain is Eukaryotic translation initiation factor 3 subunit I, found in Drosophila ananassae (Fruit fly).